A 200-amino-acid chain; its full sequence is Cell division protein SepF (200 aa).

2 disordered regions span residues 35 to 60 and 170 to 200; these read NLYQ…RWRE and LHEV…RMAQ. The segment covering 183-200 has biased composition (polar residues); that stretch reads PTGSPNQTWGNETNRMAQ.

The protein belongs to the SepF family. As to quaternary structure, homodimer. Interacts with FtsZ.

It localises to the cytoplasm. Its function is as follows. Cell division protein that is part of the divisome complex and is recruited early to the Z-ring. Probably stimulates Z-ring formation, perhaps through the cross-linking of FtsZ protofilaments. Its function overlaps with FtsA. This chain is Cell division protein SepF, found in Nostoc punctiforme (strain ATCC 29133 / PCC 73102).